The sequence spans 420 residues: Glutamyl-tRNA reductase (420 aa).

Residues 49 to 52, S107, 112 to 114, and Q118 contribute to the substrate site; these read TCNR and EPQ. C50 functions as the Nucleophile in the catalytic mechanism. Position 187-192 (187-192) interacts with NADP(+); that stretch reads GAGETI.

This sequence belongs to the glutamyl-tRNA reductase family. In terms of assembly, homodimer.

The catalysed reaction is (S)-4-amino-5-oxopentanoate + tRNA(Glu) + NADP(+) = L-glutamyl-tRNA(Glu) + NADPH + H(+). The protein operates within porphyrin-containing compound metabolism; protoporphyrin-IX biosynthesis; 5-aminolevulinate from L-glutamyl-tRNA(Glu): step 1/2. Functionally, catalyzes the NADPH-dependent reduction of glutamyl-tRNA(Glu) to glutamate 1-semialdehyde (GSA). The chain is Glutamyl-tRNA reductase from Methylococcus capsulatus (strain ATCC 33009 / NCIMB 11132 / Bath).